Reading from the N-terminus, the 279-residue chain is Urease accessory protein UreD (279 aa).

Belongs to the UreD family. UreD, UreF and UreG form a complex that acts as a GTP-hydrolysis-dependent molecular chaperone, activating the urease apoprotein by helping to assemble the nickel containing metallocenter of UreC. The UreE protein probably delivers the nickel.

Its subcellular location is the cytoplasm. Functionally, required for maturation of urease via the functional incorporation of the urease nickel metallocenter. The chain is Urease accessory protein UreD from Trichormus variabilis (strain ATCC 29413 / PCC 7937) (Anabaena variabilis).